The chain runs to 115 residues: Meiotically up-regulated gene 106 protein (115 aa).

Residues 1-34 form the signal peptide; it reads MSIKVEWIKFTRLKKCATLLVQLSLLRYRYMVLA. 2 helical membrane-spanning segments follow: residues 41-60 and 81-103; these read CIVV…GALF and GVKL…FTPY.

The protein localises to the membrane. In terms of biological role, has a role in meiosis. The chain is Meiotically up-regulated gene 106 protein (mug106) from Schizosaccharomyces pombe (strain 972 / ATCC 24843) (Fission yeast).